Here is a 170-residue protein sequence, read N- to C-terminus: F107 fimbrial protein (170 aa).

The signal sequence occupies residues 1-21 (MKRLVFISFVALSMTAGSAMA). Cysteine 37 and cysteine 78 are joined by a disulfide.

It belongs to the fimbrial protein family.

It localises to the fimbrium. Fimbriae (also called pili), polar filaments radiating from the surface of the bacterium to a length of 0.5-1.5 micrometers and numbering 100-300 per cell, enable bacteria to colonize the epithelium of specific host organs. This chain is F107 fimbrial protein (fedA), found in Escherichia coli.